The following is a 300-amino-acid chain: Putative glycosyltransferase ORF300 (300 aa).

Belongs to the glycosyltransferase group 1 family. Glycosyltransferase 4 subfamily.

This Acidianus hospitalis (AFV-1) protein is Putative glycosyltransferase ORF300.